We begin with the raw amino-acid sequence, 88 residues long: Small ribosomal subunit protein bS20 (88 aa).

Residues 1–10 (MANHKSSLKR) show a composition bias toward basic residues. A disordered region spans residues 1 to 24 (MANHKSSLKRAKQDIVRNTRNKSR).

It belongs to the bacterial ribosomal protein bS20 family.

Functionally, binds directly to 16S ribosomal RNA. The chain is Small ribosomal subunit protein bS20 from Desulfosudis oleivorans (strain DSM 6200 / JCM 39069 / Hxd3) (Desulfococcus oleovorans).